Reading from the N-terminus, the 370-residue chain is Putative glutamate--cysteine ligase 2 (370 aa).

This sequence belongs to the glutamate--cysteine ligase type 2 family. YbdK subfamily.

It carries out the reaction L-cysteine + L-glutamate + ATP = gamma-L-glutamyl-L-cysteine + ADP + phosphate + H(+). Its function is as follows. ATP-dependent carboxylate-amine ligase which exhibits weak glutamate--cysteine ligase activity. This Methylibium petroleiphilum (strain ATCC BAA-1232 / LMG 22953 / PM1) protein is Putative glutamate--cysteine ligase 2.